Reading from the N-terminus, the 466-residue chain is Asparagine--tRNA ligase (466 aa).

This sequence belongs to the class-II aminoacyl-tRNA synthetase family. As to quaternary structure, homodimer.

Its subcellular location is the cytoplasm. It carries out the reaction tRNA(Asn) + L-asparagine + ATP = L-asparaginyl-tRNA(Asn) + AMP + diphosphate + H(+). The sequence is that of Asparagine--tRNA ligase from Shewanella frigidimarina (strain NCIMB 400).